The primary structure comprises 529 residues: MASREEEQRETTPERGRGAARRPPTMEDVSSPSPSPPPPRAPPKKRMRRRIESEDEEDSSQDALVPRTPSPRPSTSAADLAIAPKKKKKRPSPKPERPPSPEVIVDSEEEREDVALQMVGFSNPPVLIKHGKGGKRTVRRLNEDDPVARGMRTQEEEEEPSEAESEITVMNPLSVPIVSAWEKGMEAARALMDKYHVDNDLKANFKLLPDQVEALAAVCKTWLNEEHRGLQLTFTSKKTFVTMMGRFLQAYLQSFAEVTYKHHEPTGCALWLHRCAEIEGELKCLHGSIMINKEHVIEMDVTSENGQRALKEQSSKAKIVKNRWGRNVVQISNTDARCCVHDAACPANQFSGKSCGMFFSEGAKAQVAFKQIKAFMQALYPNAQTGHGHLLMPLRCECNSKPGHAPFLGRQLPKLTPFALSNAEDLDADLISDKSVLASVHHPALIVFQCCNPVYRNSRAQGGGPNCDFKISAPDLLNALVMVRSLWSENFTELPRMVVPEFKWSTKHQYRNVSLPVAHSDARQNPFDF.

Residues 1-17 (MASREEEQRETTPERGR) are compositionally biased toward basic and acidic residues. Disordered stretches follow at residues 1-107 (MASR…IVDS) and 125-166 (PVLI…AESE). Positions 129 to 139 (KHGKGGKRTVR) are enriched in basic residues. Positions 155-165 (EEEEEPSEAES) are enriched in acidic residues. Phosphotyrosine; by host is present on tyrosine 195. Zn(2+)-binding residues include cysteine 284 and histidine 286. Residues 297–331 (IEMDVTSENGQRALKEQSSKAKIVKNRWGRNVVQI) form a flexible loop region. 6 residues coordinate Zn(2+): cysteine 339, cysteine 355, cysteine 396, cysteine 398, cysteine 450, and cysteine 467. Positions 513–529 (VSLPVAHSDARQNPFDF) are C-terminal arm, DBP binding.

The protein belongs to the adenoviridae E2A DNA-binding protein family. As to quaternary structure, homomultimerizes on viral ssDNA bound to pTP. Forms a initiation complex with viral polymerase, pTP and hosts NFIA and POU2F1/OCT1. Interacts with host SRCAP.

The protein resides in the host nucleus. In terms of biological role, plays a role in the elongation phase of viral strand displacement replication by unwinding the template in an ATP-independent fashion, employing its capacity to form multimers. Also enhances the rate of initiation. Released from template upon second strand synthesis. Assembles in complex with viral pTP, viral pol, host NFIA and host POU2F1/OCT1 on viral origin of replication. Covers the whole ssDNA genome during synthesis. The complementary strand synthesis induces its relese from DNA template. May inhibit cellular transcription mediated by the interaction between host SRCAP and CBP. The polypeptide is DNA-binding protein (Human adenovirus C serotype 5 (HAdV-5)).